The primary structure comprises 238 residues: Pyridoxine 5'-phosphate synthase (238 aa).

Asn7 is a binding site for 3-amino-2-oxopropyl phosphate. Residue 9 to 10 participates in 1-deoxy-D-xylulose 5-phosphate binding; that stretch reads DH. Arg18 lines the 3-amino-2-oxopropyl phosphate pocket. The active-site Proton acceptor is His43. Residues Arg45 and His50 each contribute to the 1-deoxy-D-xylulose 5-phosphate site. The active-site Proton acceptor is the Glu70. 1-deoxy-D-xylulose 5-phosphate is bound at residue Thr100. The Proton donor role is filled by His190. 3-amino-2-oxopropyl phosphate contacts are provided by residues Gly191 and 212-213; that span reads GH.

It belongs to the PNP synthase family. In terms of assembly, homooctamer; tetramer of dimers.

The protein resides in the cytoplasm. It catalyses the reaction 3-amino-2-oxopropyl phosphate + 1-deoxy-D-xylulose 5-phosphate = pyridoxine 5'-phosphate + phosphate + 2 H2O + H(+). It functions in the pathway cofactor biosynthesis; pyridoxine 5'-phosphate biosynthesis; pyridoxine 5'-phosphate from D-erythrose 4-phosphate: step 5/5. In terms of biological role, catalyzes the complicated ring closure reaction between the two acyclic compounds 1-deoxy-D-xylulose-5-phosphate (DXP) and 3-amino-2-oxopropyl phosphate (1-amino-acetone-3-phosphate or AAP) to form pyridoxine 5'-phosphate (PNP) and inorganic phosphate. The chain is Pyridoxine 5'-phosphate synthase from Prochlorococcus marinus (strain MIT 9312).